We begin with the raw amino-acid sequence, 229 residues long: Endonuclease V (229 aa).

Mg(2+) is bound by residues aspartate 46 and aspartate 114.

This sequence belongs to the endonuclease V family. Mg(2+) serves as cofactor.

It is found in the cytoplasm. The catalysed reaction is Endonucleolytic cleavage at apurinic or apyrimidinic sites to products with a 5'-phosphate.. DNA repair enzyme involved in the repair of deaminated bases. Selectively cleaves double-stranded DNA at the second phosphodiester bond 3' to a deoxyinosine leaving behind the intact lesion on the nicked DNA. In Streptomyces avermitilis (strain ATCC 31267 / DSM 46492 / JCM 5070 / NBRC 14893 / NCIMB 12804 / NRRL 8165 / MA-4680), this protein is Endonuclease V.